The following is a 455-amino-acid chain: 12S seed storage protein CRB (455 aa).

Positions 1–24 (MGRVSSIISFSLTLLILFNGYTAQ) are cleaved as a signal peptide. Intrachain disulfides connect C30–C63 and C106–C276. Cupin type-1 domains lie at 35 to 229 (LNAL…ETAQ) and 282 to 431 (ENLD…EEAK). A Phosphothreonine modification is found at T109. Y299 carries the phosphotyrosine modification. 2 positions are modified to phosphoserine: S301 and S367. 2 positions are modified to phosphothreonine: T395 and T420. S436 carries the phosphoserine modification.

It belongs to the 11S seed storage protein (globulins) family. In terms of assembly, hexamer; each subunit is composed of an acidic and a basic chain derived from a single precursor and linked by a disulfide bond. Post-translationally, ubiquitinated. Proteolytically processed during seed maturation at a conserved Asn-Gly peptide bond by an asparaginyl endopeptidase to produce two mature polypeptides referred to as alpha and beta subunits that are joined together by a disulfide bond. In terms of processing, phosphorylated in seeds on some Tyr residues in response to abscisic acid (ABA). Accumulates in seeds 8 days after anthesis.

The protein localises to the protein storage vacuole. Seed storage protein. This is 12S seed storage protein CRB (CRB) from Arabidopsis thaliana (Mouse-ear cress).